The chain runs to 306 residues: MFGFLGRRRDEREVIEIEPDGPVDCIADFTYNFYWQHRGEKLDPDERIPGTSHTFREVVEHLKDGGEVIVRGDAGHRLASSMGADLAYFGGGGGVMDAGVVTVEGDVDTRMGISMVSGTIYVKGAVRDPIGNIIEVRSDRRGYKKFMSVTDILMNGLRAEPVNVTLEPGRMVIDDGHVRDTLGARLDADVEIIHHGNVDLSTGILMRRGTVRVMGDAGKNTGALLSGGTVIIQGDCDDFSGIDMRDGYLIVDGDAGKFLGAQRRGGVILARRGKPVPPTSESDLTEDDRRVLMEAGLRPHLFRRFS.

It to M.jannaschii MJ0658.

This is an uncharacterized protein from Methanothermobacter thermautotrophicus (strain ATCC 29096 / DSM 1053 / JCM 10044 / NBRC 100330 / Delta H) (Methanobacterium thermoautotrophicum).